Reading from the N-terminus, the 341-residue chain is Heat-inducible transcription repressor HrcA (341 aa).

The protein belongs to the HrcA family.

Negative regulator of class I heat shock genes (grpE-dnaK-dnaJ and groELS operons). Prevents heat-shock induction of these operons. In Symbiobacterium thermophilum (strain DSM 24528 / JCM 14929 / IAM 14863 / T), this protein is Heat-inducible transcription repressor HrcA.